The following is a 236-amino-acid chain: uncharacterized protein (236 aa).

The signal sequence occupies residues 1 to 24; the sequence is MRKKHFNMILKLALISSLLALAAS. N-linked (GlcNAc...) asparagine glycans are attached at residues asparagine 59, asparagine 171, and asparagine 197.

The protein resides in the secreted. This is an uncharacterized protein from Caenorhabditis elegans.